Reading from the N-terminus, the 508-residue chain is Probable ATP-dependent RNA helicase ddx49 (508 aa).

The short motif at K4–A32 is the Q motif element. The region spanning I35–F208 is the Helicase ATP-binding domain. ATP is bound at residue A48–T55. Residues D154–D157 carry the DEAD box motif. The Helicase C-terminal domain maps to T219 to F379. A disordered region spans residues V422–I476. The segment covering N430 to T441 has biased composition (low complexity). The segment covering T444–K454 has biased composition (basic and acidic residues).

This sequence belongs to the DEAD box helicase family. DDX49/DBP8 subfamily.

The enzyme catalyses ATP + H2O = ADP + phosphate + H(+). Functionally, probable ATP-binding RNA helicase. The polypeptide is Probable ATP-dependent RNA helicase ddx49 (ddx49) (Dictyostelium discoideum (Social amoeba)).